We begin with the raw amino-acid sequence, 493 residues long: Ribonuclease Y (493 aa).

The helical transmembrane segment at 19 to 39 (IFAILFLIIVILNLGLLVFLA) threads the bilayer. The region spanning 172–241 (SASFTVIESD…LTIRNILIND (70 aa)) is the KH domain. Positions 300-392 (VLSHCLETGF…TQIGDKLSAG (93 aa)) constitute an HD domain.

This sequence belongs to the RNase Y family.

The protein resides in the cell membrane. Functionally, endoribonuclease that initiates mRNA decay. This Mycoplasma pneumoniae (strain ATCC 29342 / M129 / Subtype 1) (Mycoplasmoides pneumoniae) protein is Ribonuclease Y.